The sequence spans 57 residues: Large ribosomal subunit protein bL33 (57 aa).

The protein belongs to the bacterial ribosomal protein bL33 family.

This Shewanella sp. (strain MR-4) protein is Large ribosomal subunit protein bL33.